The following is a 38-amino-acid chain: Potassium channel toxin alpha-KTx 2.21 (38 aa).

Intrachain disulfides connect cysteine 7–cysteine 29, cysteine 13–cysteine 34, and cysteine 17–cysteine 36.

In terms of tissue distribution, expressed by the venom gland.

It localises to the secreted. In terms of biological role, inhibits human voltage-gated potassium (Kv) channels Kv1.2/KCNA2 and Kv1.3/KCNA3. Does not block human Kv1.1/KCNA1 at 100nM concentration. The polypeptide is Potassium channel toxin alpha-KTx 2.21 (Centruroides bonito (Scorpion)).